Reading from the N-terminus, the 398-residue chain is MSLRYLRFLTAGESHGKGLTAILEGIPANLPLSEEEINHELRRRQRGYGRGGRMKIEKDTAEILSGVRFGKTLGSPIALFIRNRDWENWKEKMAIEGEPSPSVVPFTRPRPGHADLSGGIKYNQRDLRNILERASARETAARVAVGAVCKKFLSEFGIKIGSFVVSIGQKEVEELKDKSYFANPEKLLSYHEKAEDSELRIPFPEKDEEFKTYIDEVKEKGESLGGVFEVFALNVPPGLGSHIQWDRRIDGRIAQAMMSIQAIKGVEIGLGFEAARRFGSQVHDEIGWSEGKGYFRHSNNLGGTEGGITNGMPIVVRVAMKPIPTLKNPLRSVDIETKEEMKAGKERTDIVAVPAASVVGEAMLAIVLADALLEKLGGDFMEEVKKRFEDYVNHVKSF.

R44 and R50 together coordinate NADP(+). Residues 133-135 (RAS), 261-262 (QA), G306, 321-325 (KPIPT), and R347 contribute to the FMN site.

This sequence belongs to the chorismate synthase family. Homotetramer. FMNH2 serves as cofactor.

The catalysed reaction is 5-O-(1-carboxyvinyl)-3-phosphoshikimate = chorismate + phosphate. Its pathway is metabolic intermediate biosynthesis; chorismate biosynthesis; chorismate from D-erythrose 4-phosphate and phosphoenolpyruvate: step 7/7. Functionally, catalyzes the anti-1,4-elimination of the C-3 phosphate and the C-6 proR hydrogen from 5-enolpyruvylshikimate-3-phosphate (EPSP) to yield chorismate, which is the branch point compound that serves as the starting substrate for the three terminal pathways of aromatic amino acid biosynthesis. This reaction introduces a second double bond into the aromatic ring system. This is Chorismate synthase from Aquifex aeolicus (strain VF5).